The primary structure comprises 59 residues: Protein translocase subunit SecE (59 aa).

The chain crosses the membrane as a helical span at residues 39–59; sequence VMALFLGLIDALFVALLSFFF.

It belongs to the SecE/SEC61-gamma family. Component of the Sec protein translocase complex. Heterotrimer consisting of SecY, SecE and SecG subunits. The heterotrimers can form oligomers, although 1 heterotrimer is thought to be able to translocate proteins. Interacts with the ribosome. Interacts with SecDF, and other proteins may be involved. Interacts with SecA.

The protein localises to the cell inner membrane. Functionally, essential subunit of the Sec protein translocation channel SecYEG. Clamps together the 2 halves of SecY. May contact the channel plug during translocation. In Treponema pallidum (strain Nichols), this protein is Protein translocase subunit SecE.